Here is a 349-residue protein sequence, read N- to C-terminus: Phosphoribosylformylglycinamidine cyclo-ligase (349 aa).

This sequence belongs to the AIR synthase family.

The protein localises to the cytoplasm. The catalysed reaction is 2-formamido-N(1)-(5-O-phospho-beta-D-ribosyl)acetamidine + ATP = 5-amino-1-(5-phospho-beta-D-ribosyl)imidazole + ADP + phosphate + H(+). The protein operates within purine metabolism; IMP biosynthesis via de novo pathway; 5-amino-1-(5-phospho-D-ribosyl)imidazole from N(2)-formyl-N(1)-(5-phospho-D-ribosyl)glycinamide: step 2/2. In Methanococcus maripaludis (strain C7 / ATCC BAA-1331), this protein is Phosphoribosylformylglycinamidine cyclo-ligase.